A 332-amino-acid polypeptide reads, in one-letter code: tRNA dimethylallyltransferase (332 aa).

Gly-14–Thr-21 is a binding site for ATP. Thr-16–Thr-21 lines the substrate pocket. An interaction with substrate tRNA region spans residues Asp-39–Gln-42. Residues Asn-312–Leu-332 are disordered. Residues Cys-320–Leu-332 show a composition bias toward basic residues.

Belongs to the IPP transferase family. In terms of assembly, monomer. The cofactor is Mg(2+).

It catalyses the reaction adenosine(37) in tRNA + dimethylallyl diphosphate = N(6)-dimethylallyladenosine(37) in tRNA + diphosphate. Its function is as follows. Catalyzes the transfer of a dimethylallyl group onto the adenine at position 37 in tRNAs that read codons beginning with uridine, leading to the formation of N6-(dimethylallyl)adenosine (i(6)A). This Staphylococcus epidermidis (strain ATCC 35984 / DSM 28319 / BCRC 17069 / CCUG 31568 / BM 3577 / RP62A) protein is tRNA dimethylallyltransferase.